The primary structure comprises 257 residues: Isoprenyl transferase 1 (257 aa).

Asp-37 is a catalytic residue. Mg(2+) is bound at residue Asp-37. Substrate is bound by residues 38–41 (GNRR), Trp-42, His-54, and 82–84 (STD). Asn-85 (proton acceptor) is an active-site residue. Substrate contacts are provided by residues Phe-86, Arg-88, Arg-206, and 212–214 (RLS). Residue Glu-225 coordinates Mg(2+).

This sequence belongs to the UPP synthase family. As to quaternary structure, homodimer. The cofactor is Mg(2+).

Functionally, catalyzes the condensation of isopentenyl diphosphate (IPP) with allylic pyrophosphates generating different type of terpenoids. The chain is Isoprenyl transferase 1 from Streptomyces avermitilis (strain ATCC 31267 / DSM 46492 / JCM 5070 / NBRC 14893 / NCIMB 12804 / NRRL 8165 / MA-4680).